Here is an 877-residue protein sequence, read N- to C-terminus: Protein SEY1 homolog (877 aa).

Residues 1 to 735 (MVAFAGGART…LRSIEGEKQN (735 aa)) are Cytoplasmic-facing. The 259-residue stretch at 49–307 (GITYHVVGVL…VPLDGIPSYL (259 aa)) folds into the GB1/RHD3-type G domain. 59–66 (GGQSSGKS) lines the GTP pocket. Positions 388 to 410 (RIDIVRKTEAELEEELLKVELKL) form a coiled coil. The helical transmembrane segment at 736–756 (LPAWVLPVLLLLGWNEIWYVL) threads the bilayer. Residues 757–759 (SSP) are Lumenal-facing. Residues 760 to 780 (VLLVVVVIIAAVFLRGFLLTQ) traverse the membrane as a helical segment. Residues 781 to 877 (WAIFEETGPT…KEEEVPTQKE (97 aa)) lie on the Cytoplasmic side of the membrane. A disordered region spans residues 850-877 (PTVLPPSTTSATLTRRLKKEEEVPTQKE). A compositionally biased stretch (basic and acidic residues) spans 867 to 877 (KKEEEVPTQKE).

It belongs to the TRAFAC class dynamin-like GTPase superfamily. GB1/RHD3 GTPase family. RHD3 subfamily.

The protein localises to the endoplasmic reticulum membrane. Its function is as follows. Probable GTP-binding protein that may be involved in cell development. In Trypanosoma cruzi (strain CL Brener), this protein is Protein SEY1 homolog.